Reading from the N-terminus, the 69-residue chain is Protein SlyX homolog (69 aa).

This sequence belongs to the SlyX family.

This chain is Protein SlyX homolog, found in Maricaulis maris (strain MCS10) (Caulobacter maris).